The sequence spans 191 residues: Imidazoleglycerol-phosphate dehydratase (191 aa).

This sequence belongs to the imidazoleglycerol-phosphate dehydratase family.

Its subcellular location is the cytoplasm. It carries out the reaction D-erythro-1-(imidazol-4-yl)glycerol 3-phosphate = 3-(imidazol-4-yl)-2-oxopropyl phosphate + H2O. The protein operates within amino-acid biosynthesis; L-histidine biosynthesis; L-histidine from 5-phospho-alpha-D-ribose 1-diphosphate: step 6/9. The protein is Imidazoleglycerol-phosphate dehydratase of Methanosarcina mazei (strain ATCC BAA-159 / DSM 3647 / Goe1 / Go1 / JCM 11833 / OCM 88) (Methanosarcina frisia).